Reading from the N-terminus, the 687-residue chain is Cytochrome b/c1 (687 aa).

A helical transmembrane segment spans residues 46-66; that stretch reads FGAILSFMLGMQILTGVILAM. Heme b is bound by residues H96 and H110. The next 2 helical transmembrane spans lie at 126–146 and 160–180; these read VLWI…FMGY and VITN…TLLW. The heme b site is built by H197 and H211. A run of 6 helical transmembrane segments spans residues 199–219, 247–267, 305–325, 337–357, 363–383, and 410–430; these read LLPF…HVAG, FGVA…PNYL, LAGV…PWLD, LAKQ…YLGA, IYVI…LIVL, and AVAS…GSLQ. An internal signal sequence region spans residues 404-434; sequence LAKGGKAVASVAIALVAAGALFLGSLQDARA. Residues 458 to 643 form the Cytochrome c domain; the sequence is GALQRGLKVY…TVAQYSKDVT (186 aa). Positions 471, 474, 475, and 616 each coordinate heme c. Residues 666–678 form a helical membrane-spanning segment; sequence VFLIIFAGLMYFT.

It belongs to the cytochrome b family. As to quaternary structure, the main subunits of complex b-c1 are: cytochrome b, cytochrome c1 and the Rieske protein. Heme b serves as cofactor. The cofactor is heme c. Post-translationally, the protein is post-translationally processed into cytochrome b and c1. This occurs by processing between residues 434 and 435 without processing between cytochrome b and the N-terminal of the putative signal sequence domain.

The protein resides in the cell inner membrane. Component of the ubiquinol-cytochrome c reductase complex (complex III or cytochrome b-c1 complex), which is a respiratory chain that generates an electrochemical potential coupled to ATP synthesis. c1 functions as an electron donor to cytochrome c. The polypeptide is Cytochrome b/c1 (fbcH) (Bradyrhizobium diazoefficiens (strain JCM 10833 / BCRC 13528 / IAM 13628 / NBRC 14792 / USDA 110)).